The chain runs to 161 residues: Phosphopantetheine adenylyltransferase (161 aa).

Position 10 (T10) interacts with substrate. ATP-binding positions include 10–11 (TF) and H18. 3 residues coordinate substrate: K42, M74, and R88. Residues 89 to 91 (GLR), E99, and 124 to 130 (WSFISSS) each bind ATP.

The protein belongs to the bacterial CoaD family. Homohexamer. Requires Mg(2+) as cofactor.

The protein localises to the cytoplasm. It catalyses the reaction (R)-4'-phosphopantetheine + ATP + H(+) = 3'-dephospho-CoA + diphosphate. Its pathway is cofactor biosynthesis; coenzyme A biosynthesis; CoA from (R)-pantothenate: step 4/5. Reversibly transfers an adenylyl group from ATP to 4'-phosphopantetheine, yielding dephospho-CoA (dPCoA) and pyrophosphate. This Serratia proteamaculans (strain 568) protein is Phosphopantetheine adenylyltransferase.